The primary structure comprises 115 residues: Large ribosomal subunit protein bL19 (115 aa).

This sequence belongs to the bacterial ribosomal protein bL19 family.

Its function is as follows. This protein is located at the 30S-50S ribosomal subunit interface and may play a role in the structure and function of the aminoacyl-tRNA binding site. This chain is Large ribosomal subunit protein bL19, found in Sodalis glossinidius (strain morsitans).